A 514-amino-acid chain; its full sequence is Alanine--glyoxylate aminotransferase 2, mitochondrial (514 aa).

A mitochondrion-targeting transit peptide spans 1-41; the sequence is MTLIWRHLLRPLCLVTSAPRILEMHPFLSLGTSRTSVTKLS. Lys-71 carries the post-translational modification N6-acetyllysine; alternate. At Lys-71 the chain carries N6-succinyllysine; alternate. The residue at position 84 (Lys-84) is an N6-acetyllysine. Residue Lys-262 is modified to N6-acetyllysine; alternate. Lys-262 is subject to N6-succinyllysine; alternate. At Lys-304 the chain carries N6-succinyllysine. The residue at position 350 (Lys-350) is an N6-(pyridoxal phosphate)lysine. 2 positions are modified to N6-acetyllysine; alternate: Lys-417 and Lys-420. N6-succinyllysine; alternate occurs at positions 417 and 420.

Belongs to the class-III pyridoxal-phosphate-dependent aminotransferase family. In terms of assembly, homotetramer. The cofactor is pyridoxal 5'-phosphate. As to expression, expressed in the convoluted tubule in the kidney and in the liver hepatocytes (at protein level).

Its subcellular location is the mitochondrion. The catalysed reaction is glyoxylate + L-alanine = glycine + pyruvate. It catalyses the reaction (R)-3-amino-2-methylpropanoate + pyruvate = 2-methyl-3-oxopropanoate + L-alanine. It carries out the reaction 3-oxopropanoate + L-alanine = beta-alanine + pyruvate. The enzyme catalyses 2-oxobutanoate + L-alanine = (2S)-2-aminobutanoate + pyruvate. The catalysed reaction is N(omega),N(omega)-dimethyl-L-arginine + pyruvate = 5-(3,3-dimethylguanidino)-2-oxopentanoate + L-alanine. It catalyses the reaction N(omega),N('omega)-dimethyl-L-arginine + pyruvate = 5-(3,3'-dimethylguanidino)-2-oxopentanoate + L-alanine. It carries out the reaction N(omega),N(omega)-dimethyl-L-arginine + glyoxylate = 5-(3,3-dimethylguanidino)-2-oxopentanoate + glycine. The enzyme catalyses N(omega),N('omega)-dimethyl-L-arginine + glyoxylate = 5-(3,3'-dimethylguanidino)-2-oxopentanoate + glycine. The catalysed reaction is N(omega)-methyl-L-arginine + pyruvate = 5-(3-methylguanidino)-2-oxopentanoate + L-alanine. It catalyses the reaction N(omega)-methyl-L-arginine + glyoxylate = 5-(3-methylguanidino)-2-oxopentanoate + glycine. It carries out the reaction L-ornithine + pyruvate = 5-amino-2-oxopentanoate + L-alanine. The enzyme catalyses L-ornithine + glyoxylate = 5-amino-2-oxopentanoate + glycine. The catalysed reaction is (2S)-2-aminobutanoate + glyoxylate = 2-oxobutanoate + glycine. It catalyses the reaction N(omega),N(omega)-dimethyl-L-arginine + oxaloacetate = 5-(3,3-dimethylguanidino)-2-oxopentanoate + L-aspartate. It carries out the reaction oxaloacetate + L-alanine = L-aspartate + pyruvate. The enzyme catalyses N(omega),N(omega)-dimethyl-L-arginine + 2-oxobutanoate = 5-(3,3-dimethylguanidino)-2-oxopentanoate + (2S)-2-aminobutanoate. The catalysed reaction is 2-oxopentanoate + N(omega),N(omega)-dimethyl-L-arginine = 5-(3,3-dimethylguanidino)-2-oxopentanoate + L-2-aminopentanoate. It catalyses the reaction 2-oxohexanoate + N(omega),N(omega)-dimethyl-L-arginine = L-2-aminohexanoate + 5-(3,3-dimethylguanidino)-2-oxopentanoate. In terms of biological role, multifunctional aminotransferase with a broad substrate specificity. Catalyzes the conversion of glyoxylate to glycine using alanine as the amino donor. Catalyzes metabolism of not L- but the D-isomer of D-beta-aminoisobutyric acid to generate 2-methyl-3-oxopropanoate and alanine. Catalyzes the transfer of the amino group from beta-alanine to pyruvate to yield L-alanine and 3-oxopropanoate. Can metabolize NG-monomethyl-L-arginine (NMMA), asymmetric NG,NG-dimethyl-L-arginine (ADMA) and symmetric NG,N'G-dimethyl-L-arginine (SDMA). ADMA is a potent inhibitor of nitric-oxide (NO) synthase, and this activity provides mechanism through which the kidney regulates blood pressure. This Homo sapiens (Human) protein is Alanine--glyoxylate aminotransferase 2, mitochondrial (AGXT2).